A 428-amino-acid chain; its full sequence is MDSLLARVKRAADADALNPAQEGVTGGPDAAGLPDVSTSSPGGGGAGDKLKEKMDEYKDKLINEIENLPIWAIVLIIAGSLLFLVCCVYCVCRRSCRKRKKKEGKKGLKGAVDLKSVQLLGNSYKEKVQPDLDELPVNMEDNEDAESTKSEVKLGKLQFSLDYDFQKGELSVNVIQAADLPGMDMSGTSDPYVKVYLLPDKKKKYETKVHRKTLNPVFNESFTFKVPYAEVGSKILTFAVYDFDRFSKHDQIGQVQVPLNSIDLGRVVEDWKDLQSPDTESEKENKLGDICFSLRYVPTAGKLTVVILEAKNLKKMDVGGLSDPYVKIALLQGTKRLKKKKTTIKKNTLNPYFNESFGFEVPFEQIQKVTLIITVVDYDRIGTSEPIGRCVLGCNSSGTELRHWSDMLANPRRPIAQWHTLQEVPEKN.

Over 1–67 the chain is Vesicular; sequence MDSLLARVKR…KDKLINEIEN (67 aa). The interval 16-50 is disordered; that stretch reads ALNPAQEGVTGGPDAAGLPDVSTSSPGGGGAGDKL. The helical transmembrane segment at 68 to 92 threads the bilayer; it reads LPIWAIVLIIAGSLLFLVCCVYCVC. Over 93–428 the chain is Cytoplasmic; it reads RRSCRKRKKK…HTLQEVPEKN (336 aa). Ser-123 carries the phosphoserine; by PRKC2 modification. The interval 147-395 is phospholipid binding; that stretch reads STKSEVKLGK…PIGRCVLGCN (249 aa). C2 domains are found at residues 153-272 and 286-419; these read KLGK…EDWK and KLGD…AQWH. Asp-184, Asp-190, Asp-242, Phe-243, Asp-244, Ser-247, Lys-248, Asp-250, Asp-317, Asp-323, Asp-377, and Asp-379 together coordinate Ca(2+).

Belongs to the synaptotagmin family. Binds SNAP25. Isoform 3 binds SNAP25 with higher affinity. Requires Ca(2+) as cofactor.

The protein resides in the cytoplasmic vesicle. The protein localises to the secretory vesicle. Its subcellular location is the synaptic vesicle membrane. It is found in the synapse. Acts as inhibitor of neurotransmitter release. Overexpression leads to a decrease in the amplitude of the excitatory postsynaptic potential in dissected cholinergic and glutaminergic neurons while depletion with antisense oligonucleotides leads to an increase. Overexpression of isoform 1 blocks the reversal of synaptic depression by serotonin in sensory neurons. The chain is Synaptotagmin-1 (SYT1) from Aplysia californica (California sea hare).